The sequence spans 194 residues: Endo-1,4-beta-xylanase (194 aa).

An N-acetylglycine modification is found at Gly-1. The GH11 domain occupies 1–191 (GTTPNSEGWH…SSGYARITVA (191 aa)). Glu-86 serves as the catalytic Nucleophile. A disulfide bridge connects residues Cys-110 and Cys-154. The active-site Proton donor is the Glu-178.

This sequence belongs to the glycosyl hydrolase 11 (cellulase G) family.

The catalysed reaction is Endohydrolysis of (1-&gt;4)-beta-D-xylosidic linkages in xylans.. It participates in glycan degradation; xylan degradation. The polypeptide is Endo-1,4-beta-xylanase (Byssochlamys spectabilis (Paecilomyces variotii)).